The primary structure comprises 522 residues: Glutamate--cysteine ligase (522 aa).

It belongs to the glutamate--cysteine ligase type 1 family. Type 1 subfamily.

The catalysed reaction is L-cysteine + L-glutamate + ATP = gamma-L-glutamyl-L-cysteine + ADP + phosphate + H(+). The protein operates within sulfur metabolism; glutathione biosynthesis; glutathione from L-cysteine and L-glutamate: step 1/2. This Shewanella pealeana (strain ATCC 700345 / ANG-SQ1) protein is Glutamate--cysteine ligase.